A 456-amino-acid polypeptide reads, in one-letter code: Putative sodium-coupled neutral amino acid transporter 11 (456 aa).

Residues 1–25 are disordered; it reads MRAGPRRQHLLPPQDNRAAVGYQRQ. The chain crosses the membrane as a helical span at residues 58–78; sequence FNVVNSIIGSGIIDFSLILLI. N-linked (GlcNAc...) asparagine glycosylation is present at asparagine 94. The next 6 membrane-spanning stretches (helical) occupy residues 98–118, 143–163, 171–191, 206–226, 252–272, and 291–313; these read GFPGYILLSVLQFLYPFIAMI, VFIGRHFIIGLSTVTFTLPLS, LGKVSLISTGLTTLILGIVMA, AWVFAKPNAIQAVGVMSFAFI, MSIVISVFICIFFATCGYLTF, and VTFGRFCYGVTVILTYPMECFVT. A glycan (N-linked (GlcNAc...) asparagine) is linked at asparagine 325. Helical transmembrane passes span 329–349, 351–371, and 390–410; these read VFHIVVTVMVITVATLVSLLI, CLGIVLELNGVLCATPLIFII, and IMSYVMLPIGAAVMVFGFVMA.

This sequence belongs to the amino acid/polyamine transporter 2 family.

It localises to the membrane. Its function is as follows. Putative sodium-dependent amino acid/proton antiporter. The sequence is that of Putative sodium-coupled neutral amino acid transporter 11 (SLC38A11) from Macaca fascicularis (Crab-eating macaque).